Consider the following 200-residue polypeptide: ATP-dependent Clp protease proteolytic subunit 3 (200 aa).

Ser101 serves as the catalytic Nucleophile. His126 is an active-site residue.

It belongs to the peptidase S14 family. As to quaternary structure, fourteen ClpP subunits assemble into 2 heptameric rings which stack back to back to give a disk-like structure with a central cavity, resembling the structure of eukaryotic proteasomes.

It localises to the cytoplasm. It catalyses the reaction Hydrolysis of proteins to small peptides in the presence of ATP and magnesium. alpha-casein is the usual test substrate. In the absence of ATP, only oligopeptides shorter than five residues are hydrolyzed (such as succinyl-Leu-Tyr-|-NHMec, and Leu-Tyr-Leu-|-Tyr-Trp, in which cleavage of the -Tyr-|-Leu- and -Tyr-|-Trp bonds also occurs).. Functionally, cleaves peptides in various proteins in a process that requires ATP hydrolysis. Has a chymotrypsin-like activity. Plays a major role in the degradation of misfolded proteins. This Parasynechococcus marenigrum (strain WH8102) protein is ATP-dependent Clp protease proteolytic subunit 3.